Consider the following 202-residue polypeptide: Arenicin-2 (202 aa).

Positions 1–25 (MTSTQSVAVYATLILAIFCFNDIHC) are cleaved as a signal peptide. Residues 26-181 (DPIAEARAAA…SGDNNEPEKR (156 aa)) constitute a propeptide that is removed on maturation. The BRICHOS domain maps to 73-168 (GDGVEGSVMV…ACQGKSVYWL (96 aa)). 2 disulfides stabilise this stretch: Cys-100-Cys-160 and Cys-184-Cys-201.

Has antimicrobial activity against the Gram-negative bacteria E.coli and P.mirabilis, the Gram-positive bacterium L.monocytogenes and the yeast C.albicans. This Arenicola marina (Lugworm) protein is Arenicin-2.